Consider the following 2067-residue polypeptide: Separin (2067 aa).

4 disordered regions span residues 51 to 91, 140 to 167, 1316 to 1363, and 1449 to 1478; these read RTAR…AQDV, KKDA…TDNE, DLEE…SVEA, and LEPK…TKAQ. Positions 55–86 are enriched in low complexity; sequence GTKATATNATASSRAKTTRTKSTSTSTTRTKT. 2 stretches are compositionally biased toward low complexity: residues 1333-1354 and 1449-1461; these read TRQP…ARST and LEPK…SSKS. Residues 1880–1975 form the Peptidase C50 domain; the sequence is RRNGTYILNP…SGTLTEAGEY (96 aa). Residue C1964 is part of the active site.

The protein localises to the nucleus. The catalysed reaction is All bonds known to be hydrolyzed by this endopeptidase have arginine in P1 and an acidic residue in P4. P6 is often occupied by an acidic residue or by a hydroxy-amino-acid residue, the phosphorylation of which enhances cleavage.. Functionally, required for nuclear division. Could function in the mitotic spindle. The polypeptide is Separin (bimB) (Emericella nidulans (strain FGSC A4 / ATCC 38163 / CBS 112.46 / NRRL 194 / M139) (Aspergillus nidulans)).